We begin with the raw amino-acid sequence, 147 residues long: Hemoglobin subunit beta (147 aa).

Val-2 carries the post-translational modification N-acetylvaline. In terms of domain architecture, Globin spans 3–147 (NLSGDEKNAV…VANALAHRYH (145 aa)). Ser-45 is modified (phosphoserine). N6-acetyllysine is present on Lys-60. Residue His-64 coordinates heme b. Lys-83 is subject to N6-acetyllysine. Position 93 (His-93) interacts with heme b. Cys-94 is subject to S-nitrosocysteine.

Belongs to the globin family. In terms of assembly, heterotetramer of two alpha chains and two beta chains. As to expression, red blood cells.

Involved in oxygen transport from the lung to the various peripheral tissues. The polypeptide is Hemoglobin subunit beta (HBB) (Vicugna pacos (Alpaca)).